The primary structure comprises 258 residues: DNA repair protein RecO (258 aa).

It belongs to the RecO family.

Involved in DNA repair and RecF pathway recombination. The sequence is that of DNA repair protein RecO from Desulfatibacillum aliphaticivorans.